A 399-amino-acid polypeptide reads, in one-letter code: Interferon regulatory factor 9 (399 aa).

The IRF tryptophan pentad repeat DNA-binding region spans 9–116 (TRKLRSWIVE…EPYKVYRILP (108 aa)). The tract at residues 118–189 (GTLPNQPRNQ…CNSELEEGAG (72 aa)) is disordered. Residues 120 to 129 (LPNQPRNQKS) are compositionally biased toward polar residues. Ser-139 is subject to Phosphoserine. The segment covering 148-157 (NGRTNGVVNH) has biased composition (polar residues). The segment covering 171 to 189 (SNRSDSNSNCNSELEEGAG) has biased composition (low complexity). Ser-393 is subject to Phosphoserine.

It belongs to the IRF family. As to quaternary structure, interacts with STAT2 in the cytoplasm. Forms the interferon-stimulated gene factor 3 complex (ISGF3) with the heterodimer STAT1:STAT2; upon stimulation.

The protein localises to the nucleus. Functionally, transcription factor that plays an essential role in anti-viral immunity. It mediates signaling by type I IFNs (IFN-alpha and IFN-beta). Following type I IFN binding to cell surface receptors, Jak kinases (TYK2 and JAK1) are activated, leading to tyrosine phosphorylation of STAT1 and STAT2. IRF9/ISGF3G associates with the phosphorylated STAT1:STAT2 dimer to form a complex termed ISGF3 transcription factor, that enters the nucleus. ISGF3 binds to the IFN stimulated response element (ISRE) to activate the transcription of interferon stimulated genes, which drive the cell in an antiviral state. The chain is Interferon regulatory factor 9 (Irf9) from Mus musculus (Mouse).